The following is a 44-amino-acid chain: Small, acid-soluble spore protein N (44 aa).

A disordered region spans residues 1 to 44 (MGNPKKNSKDFVPNHIGTQSKKAGGNKGKQMQDTTGKQPIVDNG).

This sequence belongs to the SspN family.

The protein resides in the spore core. The polypeptide is Small, acid-soluble spore protein N (Bacillus cytotoxicus (strain DSM 22905 / CIP 110041 / 391-98 / NVH 391-98)).